The chain runs to 486 residues: Ribulose bisphosphate carboxylase large chain 1 (486 aa).

The substrate site is built by asparagine 125 and threonine 175. The Proton acceptor role is filled by lysine 177. Lysine 179 is a binding site for substrate. The Mg(2+) site is built by lysine 203, aspartate 205, and glutamate 206. Residue lysine 203 is modified to N6-carboxylysine. The Proton acceptor role is filled by histidine 295. Substrate is bound by residues arginine 296, histidine 328, and serine 380.

Belongs to the RuBisCO large chain family. Type I subfamily. As to quaternary structure, heterohexadecamer of 8 large chains and 8 small chains. The cofactor is Mg(2+).

The enzyme catalyses 2 (2R)-3-phosphoglycerate + 2 H(+) = D-ribulose 1,5-bisphosphate + CO2 + H2O. It catalyses the reaction D-ribulose 1,5-bisphosphate + O2 = 2-phosphoglycolate + (2R)-3-phosphoglycerate + 2 H(+). Functionally, ruBisCO catalyzes two reactions: the carboxylation of D-ribulose 1,5-bisphosphate, the primary event in carbon dioxide fixation, as well as the oxidative fragmentation of the pentose substrate. Both reactions occur simultaneously and in competition at the same active site. The chain is Ribulose bisphosphate carboxylase large chain 1 from Cereibacter sphaeroides (strain ATCC 17025 / ATH 2.4.3) (Rhodobacter sphaeroides).